The primary structure comprises 485 residues: NADH-quinone oxidoreductase subunit N (485 aa).

A run of 14 helical transmembrane segments spans residues 8–28 (LIALSPLLIVGLTVVVVMLCI), 35–55 (FVNATMTVIGLNIALLSLYFV), 75–95 (FYTGLVLLASLATSTFAYPWL), 105–125 (FYLLVLIAALGGILLSSANHL), 127–147 (SLFIGIELLSLPLFGLVGYAF), 159–179 (YMLLSAAASSFLLFGMALIYA), 203–223 (LLAGLGMMIVGLGFKLSLVPF), 235–255 (PAPVSTFLATAGKIAVFGAVM), 271–291 (IVLSIIAFASIMFGNVMAVSQ), 297–317 (LLGYSSIAHLGYLLVALIAVQ), 326–346 (VGVYLVGYLFSSLGAFGVVSL), 374–394 (AVMTVMMLSLAGIPMTLGFFG), 407–426 (LWWLTGAVVLGSAIGLYYYL), and 449–469 (ALTAGGVVVLISSIVVLFFGL).

The protein belongs to the complex I subunit 2 family. NDH-1 is composed of 13 different subunits. Subunits NuoA, H, J, K, L, M, N constitute the membrane sector of the complex.

Its subcellular location is the cell inner membrane. The catalysed reaction is a quinone + NADH + 5 H(+)(in) = a quinol + NAD(+) + 4 H(+)(out). Functionally, NDH-1 shuttles electrons from NADH, via FMN and iron-sulfur (Fe-S) centers, to quinones in the respiratory chain. The immediate electron acceptor for the enzyme in this species is believed to be ubiquinone. Couples the redox reaction to proton translocation (for every two electrons transferred, four hydrogen ions are translocated across the cytoplasmic membrane), and thus conserves the redox energy in a proton gradient. In Pectobacterium atrosepticum (strain SCRI 1043 / ATCC BAA-672) (Erwinia carotovora subsp. atroseptica), this protein is NADH-quinone oxidoreductase subunit N.